The primary structure comprises 294 residues: uncharacterized protein (294 aa).

This is an uncharacterized protein from Bacillus subtilis (strain 168).